Here is a 37-residue protein sequence, read N- to C-terminus: Cytochrome b6-f complex subunit 5 (37 aa).

The helical transmembrane segment at 5 to 25 (LLSGIVLGLITVSALGLFVAA) threads the bilayer.

The protein belongs to the PetG family. In terms of assembly, the 4 large subunits of the cytochrome b6-f complex are cytochrome b6, subunit IV (17 kDa polypeptide, PetD), cytochrome f and the Rieske protein, while the 4 small subunits are PetG, PetL, PetM and PetN. The complex functions as a dimer.

Its subcellular location is the plastid. The protein resides in the chloroplast thylakoid membrane. Component of the cytochrome b6-f complex, which mediates electron transfer between photosystem II (PSII) and photosystem I (PSI), cyclic electron flow around PSI, and state transitions. PetG is required for either the stability or assembly of the cytochrome b6-f complex. The polypeptide is Cytochrome b6-f complex subunit 5 (Phaeodactylum tricornutum (strain CCAP 1055/1)).